The following is a 352-amino-acid chain: UDP-3-O-acylglucosamine N-acyltransferase (352 aa).

The Proton acceptor role is filled by His244.

The protein belongs to the transferase hexapeptide repeat family. LpxD subfamily. As to quaternary structure, homotrimer.

It carries out the reaction a UDP-3-O-[(3R)-3-hydroxyacyl]-alpha-D-glucosamine + a (3R)-hydroxyacyl-[ACP] = a UDP-2-N,3-O-bis[(3R)-3-hydroxyacyl]-alpha-D-glucosamine + holo-[ACP] + H(+). It functions in the pathway bacterial outer membrane biogenesis; LPS lipid A biosynthesis. Its function is as follows. Catalyzes the N-acylation of UDP-3-O-acylglucosamine using 3-hydroxyacyl-ACP as the acyl donor. Is involved in the biosynthesis of lipid A, a phosphorylated glycolipid that anchors the lipopolysaccharide to the outer membrane of the cell. This chain is UDP-3-O-acylglucosamine N-acyltransferase, found in Anaeromyxobacter sp. (strain Fw109-5).